Consider the following 428-residue polypeptide: Enolase (428 aa).

Residue Gln163 coordinates (2R)-2-phosphoglycerate. Glu205 acts as the Proton donor in catalysis. Residues Asp242, Glu285, and Asp312 each coordinate Mg(2+). 4 residues coordinate (2R)-2-phosphoglycerate: Lys337, Arg366, Ser367, and Lys388. Lys337 functions as the Proton acceptor in the catalytic mechanism.

It belongs to the enolase family. Requires Mg(2+) as cofactor.

It localises to the cytoplasm. Its subcellular location is the secreted. The protein localises to the cell surface. The enzyme catalyses (2R)-2-phosphoglycerate = phosphoenolpyruvate + H2O. The protein operates within carbohydrate degradation; glycolysis; pyruvate from D-glyceraldehyde 3-phosphate: step 4/5. Functionally, catalyzes the reversible conversion of 2-phosphoglycerate (2-PG) into phosphoenolpyruvate (PEP). It is essential for the degradation of carbohydrates via glycolysis. This is Enolase from Nitrosomonas eutropha (strain DSM 101675 / C91 / Nm57).